The following is a 156-amino-acid chain: ATP synthase subunit b (156 aa).

A helical transmembrane segment spans residues 11–31; sequence LIAFALFVWFCMKFVWPPIIN.

Belongs to the ATPase B chain family. F-type ATPases have 2 components, F(1) - the catalytic core - and F(0) - the membrane proton channel. F(1) has five subunits: alpha(3), beta(3), gamma(1), delta(1), epsilon(1). F(0) has three main subunits: a(1), b(2) and c(10-14). The alpha and beta chains form an alternating ring which encloses part of the gamma chain. F(1) is attached to F(0) by a central stalk formed by the gamma and epsilon chains, while a peripheral stalk is formed by the delta and b chains.

It is found in the cell inner membrane. F(1)F(0) ATP synthase produces ATP from ADP in the presence of a proton or sodium gradient. F-type ATPases consist of two structural domains, F(1) containing the extramembraneous catalytic core and F(0) containing the membrane proton channel, linked together by a central stalk and a peripheral stalk. During catalysis, ATP synthesis in the catalytic domain of F(1) is coupled via a rotary mechanism of the central stalk subunits to proton translocation. Functionally, component of the F(0) channel, it forms part of the peripheral stalk, linking F(1) to F(0). This chain is ATP synthase subunit b, found in Haemophilus influenzae (strain PittEE).